The following is a 93-amino-acid chain: Co-chaperonin GroES (93 aa).

This sequence belongs to the GroES chaperonin family. As to quaternary structure, heptamer of 7 subunits arranged in a ring. Interacts with the chaperonin GroEL.

It is found in the cytoplasm. In terms of biological role, together with the chaperonin GroEL, plays an essential role in assisting protein folding. The GroEL-GroES system forms a nano-cage that allows encapsulation of the non-native substrate proteins and provides a physical environment optimized to promote and accelerate protein folding. GroES binds to the apical surface of the GroEL ring, thereby capping the opening of the GroEL channel. In Lacticaseibacillus paracasei (strain ATCC 334 / BCRC 17002 / CCUG 31169 / CIP 107868 / KCTC 3260 / NRRL B-441) (Lactobacillus paracasei), this protein is Co-chaperonin GroES.